The primary structure comprises 106 residues: Small cardioactive peptide-related peptide (106 aa).

Residues 1–20 form the signal peptide; it reads MFCKHLSFVAITICFLLVLA. The propeptide at 21 to 41 is amino-terminal spacer peptide; it reads KTENEIQQKNIKFDQRTWRNM. At glutamine 52 the chain carries Glutamine amide. A propeptide spans 55 to 106 (carboxy-terminal spacer peptide); the sequence is SDNQPDYTCCGMPLTKYVGICPIGMECCPGLKKVLQKSGQRTIYSVCVADAY.

In terms of tissue distribution, expression is seen in the peripheral and central nervous systems in tissues such as the brain, the inferior buccal ganglion, the gastric ganglion, the olfactory lobe, the peduncle lobe and the optic lobe. Expression in the brain is distributed in the median inferior frontal lobe, the superior buccal lobe, the prebranchial lobe and the pedal lobe. Not expressed in the vasomotor lobe or the palliovisceral lobe that controls the cardiac system.

The protein localises to the secreted. In terms of biological role, evokes contractions in the radula protractor muscle, and may regulate feeding behavior and gut motility by controlling muscle contraction of the buccal mass. This Octopus vulgaris (Common octopus) protein is Small cardioactive peptide-related peptide.